The sequence spans 246 residues: Probable 2-phosphosulfolactate phosphatase (246 aa).

It belongs to the ComB family. The cofactor is Mg(2+).

It carries out the reaction (2R)-O-phospho-3-sulfolactate + H2O = (2R)-3-sulfolactate + phosphate. This Nostoc punctiforme (strain ATCC 29133 / PCC 73102) protein is Probable 2-phosphosulfolactate phosphatase.